A 339-amino-acid chain; its full sequence is Fructose-1,6-bisphosphatase isozyme 2 (339 aa).

The interval 3–10 (DRSPFETD) is important for interaction with ALDOA. AMP is bound by residues Val18 and 28–32 (TGELT). Residues Asp69 and Glu98 each contribute to the Mg(2+) site. 113–114 (KY) lines the AMP pocket. Positions 119, 121, and 122 each coordinate Mg(2+). Substrate is bound at residue Asp122. Residue Arg141 participates in AMP binding. The Nuclear localization signal motif lies at 204–208 (KKKGK). 213–216 (NEGY) contacts substrate. 2 positions are modified to phosphotyrosine: Tyr216 and Tyr219. Residues 245–249 (YVGSM), Tyr265, and Lys275 contribute to the substrate site. Residue Glu281 participates in Mg(2+) binding.

Belongs to the FBPase class 1 family. As to quaternary structure, homotetramer. Interacts with ALDOA; the interaction blocks inhibition by physiological concentrations of AMP and reduces inhibition by Ca(2+). Interacts with alpha-actinin and F-actin. Mg(2+) serves as cofactor. In terms of tissue distribution, expressed in muscle, intestine, brain and placenta and very weakly in liver.

The protein resides in the cell junction. It localises to the cytoplasm. Its subcellular location is the nucleus. The protein localises to the myofibril. It is found in the sarcomere. The protein resides in the z line. The catalysed reaction is beta-D-fructose 1,6-bisphosphate + H2O = beta-D-fructose 6-phosphate + phosphate. The protein operates within carbohydrate biosynthesis; gluconeogenesis. With respect to regulation, subject to complex allosteric regulation. The enzyme can assume an active R-state, or an inactive T-state. Intermediate conformations may exist. AMP acts as an allosteric inhibitor. Fructose 2,6-bisphosphate acts as a competitive inhibitor. Strongly inhibited by Ca(2+). Catalyzes the hydrolysis of fructose 1,6-bisphosphate to fructose 6-phosphate in the presence of divalent cations and probably participates in glycogen synthesis from carbohydrate precursors, such as lactate. This chain is Fructose-1,6-bisphosphatase isozyme 2 (Fbp2), found in Mus musculus (Mouse).